Consider the following 189-residue polypeptide: Chitin synthase 1 (189 aa).

The protein belongs to the chitin synthase family. Class I subfamily.

Its subcellular location is the cell membrane. It catalyses the reaction [(1-&gt;4)-N-acetyl-beta-D-glucosaminyl](n) + UDP-N-acetyl-alpha-D-glucosamine = [(1-&gt;4)-N-acetyl-beta-D-glucosaminyl](n+1) + UDP + H(+). In terms of biological role, polymerizes chitin, a structural polymer of the cell wall and septum, by transferring the sugar moiety of UDP-GlcNAc to the non-reducing end of the growing chitin polymer. This is Chitin synthase 1 (chs1) from Aspergillus niger.